A 176-amino-acid polypeptide reads, in one-letter code: Large ribosomal subunit protein uL6 (176 aa).

The segment covering 151 to 170 has biased composition (basic and acidic residues); the sequence is RPPEPYKGKGVRYADEQVRR. Residues 151 to 176 form a disordered region; the sequence is RPPEPYKGKGVRYADEQVRRKEAKKK.

Belongs to the universal ribosomal protein uL6 family. As to quaternary structure, part of the 50S ribosomal subunit.

In terms of biological role, this protein binds to the 23S rRNA, and is important in its secondary structure. It is located near the subunit interface in the base of the L7/L12 stalk, and near the tRNA binding site of the peptidyltransferase center. This chain is Large ribosomal subunit protein uL6, found in Shewanella halifaxensis (strain HAW-EB4).